The chain runs to 154 residues: Prefoldin subunit alpha (154 aa).

A disordered region spans residues 119–154 (EKAEVETEMEELEQQAQQMQQQQMQQMMQQQEQEDE). Over residues 132–154 (QQAQQMQQQQMQQMMQQQEQEDE) the composition is skewed to low complexity.

It belongs to the prefoldin subunit alpha family. Heterohexamer of two alpha and four beta subunits.

It localises to the cytoplasm. Molecular chaperone capable of stabilizing a range of proteins. Seems to fulfill an ATP-independent, HSP70-like function in archaeal de novo protein folding. The polypeptide is Prefoldin subunit alpha (Haloarcula marismortui (strain ATCC 43049 / DSM 3752 / JCM 8966 / VKM B-1809) (Halobacterium marismortui)).